Reading from the N-terminus, the 301-residue chain is Thyrotroph embryonic factor (301 aa).

Disordered stretches follow at residues 1-70 and 130-174; these read MSDA…ASTM and ESAS…DPSC. The residue at position 30 (S30) is a Phosphoserine. Over residues 39–59 the composition is skewed to basic and acidic residues; that stretch reads KLMENPPRETRLDKEKGKEKL. A compositionally biased stretch (low complexity) spans 131–158; it reads SASSSTASPPSSSTAIFQPSETVSSTES. A bZIP domain is found at 231 to 294; the sequence is DEKYWTRRKK…GKCKTIVSKY (64 aa). Residues 233 to 253 are basic motif; it reads KYWTRRKKNNVAAKRSRDARR. The tract at residues 254 to 261 is leucine-zipper; the sequence is LKENQITI.

It belongs to the bZIP family. PAR subfamily. Binds DNA as a homodimer or a heterodimer. Can form a heterodimer with DBP. As to expression, isoform Alpha and isoform Beta are expressed at high levels in lung, bladder, kidney, gut and brain.

It is found in the nucleus. Its function is as follows. Transcription factor that binds to and transactivates the TSHB promoter. Binds to a minimal DNA-binding sequence 5'-[TC][AG][AG]TTA[TC][AG]-3'. Also activates the telokin promoter in smooth muscle-specific and calcium-dependent manner. The protein is Thyrotroph embryonic factor (Tef) of Mus musculus (Mouse).